Reading from the N-terminus, the 638-residue chain is DNA mismatch repair protein MutL (638 aa).

The disordered stretch occupies residues 398–435; it reads GREGTSFGTQTNAFGSMATPRDNSRGSYSAGESRQRTE.

The protein belongs to the DNA mismatch repair MutL/HexB family.

This protein is involved in the repair of mismatches in DNA. It is required for dam-dependent methyl-directed DNA mismatch repair. May act as a 'molecular matchmaker', a protein that promotes the formation of a stable complex between two or more DNA-binding proteins in an ATP-dependent manner without itself being part of a final effector complex. This is DNA mismatch repair protein MutL from Shewanella baltica (strain OS155 / ATCC BAA-1091).